The following is a 474-amino-acid chain: Protein U79/U80 (474 aa).

Composition is skewed to basic and acidic residues over residues 156–165 (DRKKHDDEHR) and 175–219 (RKVE…KRQK). Disordered stretches follow at residues 156-219 (DRKK…KRQK) and 412-441 (SGQN…SRTQ). Positions 417-432 (GRARGRGRGRAPRRRN) are enriched in basic residues.

The protein belongs to the herpesviridae U79/UL112 family.

The protein resides in the host nucleus. In terms of biological role, may be involved in DNA replication. This Homo sapiens (Human) protein is Protein U79/U80 (U79/U80).